The primary structure comprises 287 residues: Protease HtpX (287 aa).

Helical transmembrane passes span 4-24 and 33-53; these read IFLL…VMSI and GGLL…SLAI. His-139 contacts Zn(2+). Glu-140 is an active-site residue. Residue His-143 participates in Zn(2+) binding. Transmembrane regions (helical) follow at residues 154-174 and 195-215; these read LIQG…AGII and AVVF…VAYF. Residue Glu-220 participates in Zn(2+) binding.

This sequence belongs to the peptidase M48B family. The cofactor is Zn(2+).

Its subcellular location is the cell inner membrane. The sequence is that of Protease HtpX from Shewanella pealeana (strain ATCC 700345 / ANG-SQ1).